A 138-amino-acid chain; its full sequence is Acidic phospholipase A2 ammodytin I1 (138 aa).

The first 16 residues, 1–16 (MRILWIVAVCLIGAEG), serve as a signal peptide directing secretion. Disulfide bonds link Cys42-Cys131, Cys44-Cys60, Cys59-Cys111, Cys65-Cys138, Cys66-Cys104, Cys73-Cys97, and Cys91-Cys102. Positions 43, 45, and 47 each coordinate Ca(2+). His63 is an active-site residue. Asp64 provides a ligand contact to Ca(2+). Asp105 is a catalytic residue.

This sequence belongs to the phospholipase A2 family. Group II subfamily. D49 sub-subfamily. Requires Ca(2+) as cofactor. Expressed by the venom gland.

The protein resides in the secreted. It catalyses the reaction a 1,2-diacyl-sn-glycero-3-phosphocholine + H2O = a 1-acyl-sn-glycero-3-phosphocholine + a fatty acid + H(+). In terms of biological role, snake venom phospholipase A2 (PLA2) that has enzymatic activity but is non-toxic. PLA2 catalyzes the calcium-dependent hydrolysis of the 2-acyl groups in 3-sn-phosphoglycerides. In Vipera ammodytes ammodytes (Western sand viper), this protein is Acidic phospholipase A2 ammodytin I1.